Consider the following 172-residue polypeptide: Adenine phosphoribosyltransferase (172 aa).

This sequence belongs to the purine/pyrimidine phosphoribosyltransferase family. In terms of assembly, homodimer.

It is found in the cytoplasm. It catalyses the reaction AMP + diphosphate = 5-phospho-alpha-D-ribose 1-diphosphate + adenine. The protein operates within purine metabolism; AMP biosynthesis via salvage pathway; AMP from adenine: step 1/1. In terms of biological role, catalyzes a salvage reaction resulting in the formation of AMP, that is energically less costly than de novo synthesis. The chain is Adenine phosphoribosyltransferase from Lactiplantibacillus plantarum (strain ATCC BAA-793 / NCIMB 8826 / WCFS1) (Lactobacillus plantarum).